Here is a 174-residue protein sequence, read N- to C-terminus: Ferredoxin-thioredoxin reductase, variable chain, chloroplastic (174 aa).

Residues 1-62 constitute a chloroplast transit peptide; it reads MTTGVAVMSS…RTRARLAICC (62 aa). Low complexity predominate over residues 69 to 81; sequence DSSTGFDSSSSSP. The tract at residues 69 to 89 is disordered; sequence DSSTGFDSSSSSPPEEDEELK. 2 positions are modified to phosphoserine: serine 70 and serine 71.

It belongs to the ferredoxin thioredoxin reductase alpha subunit family. In terms of assembly, heterodimer of subunit A (variable subunit) and subunit B (catalytic subunit). Heterodimeric FTR forms a complex with ferredoxin and thioredoxin.

It localises to the plastid. It is found in the chloroplast. Functionally, variable subunit of the ferredoxin-thioredoxin reductase (FTR), which catalyzes the two-electron reduction of thioredoxins by the electrons provided by reduced ferredoxin. This chain is Ferredoxin-thioredoxin reductase, variable chain, chloroplastic (FTRV), found in Spinacia oleracea (Spinach).